A 258-amino-acid chain; its full sequence is Serine protease VLSP-3 (258 aa).

The signal sequence occupies residues 1-18 (MVLIRVLANLLVLQLSYA). The propeptide occupies 19 to 24 (QKSSEL). One can recognise a Peptidase S1 domain in the interval 25–249 (VIGGDECNIN…YTDWIQSIIA (225 aa)). 6 disulfide bridges follow: C31–C163, C50–C66, C98–C256, C142–C210, C174–C189, and C200–C225. The N-linked (GlcNAc...) asparagine glycan is linked to N44. H65 acts as the Charge relay system in catalysis. N-linked (GlcNAc...) asparagine glycans are attached at residues N79 and N103. The Charge relay system role is filled by D110. N154 and N170 each carry an N-linked (GlcNAc...) asparagine glycan. S204 serves as the catalytic Charge relay system. A glycan (N-linked (GlcNAc...) asparagine) is linked at N251.

This sequence belongs to the peptidase S1 family. Snake venom subfamily. Monomer. As to expression, expressed by the venom gland.

The protein localises to the secreted. Functionally, snake venom serine protease that may act in the hemostasis system of the prey. In Macrovipera lebetinus (Levantine viper), this protein is Serine protease VLSP-3.